The primary structure comprises 333 residues: MTKIFAYAIREDEKPFLKEWEDAHKDVEVEYTDKLLTPETVALAKGADGVVVYQQLDYTAETLQALADNGITKMSLRNVGVDNIDMAKAKELGFQITNVPVYSPNAIAEHAAIQAARILRQDKAMDEKVARHDLRWAPTIGREVRDQVVGVIGTGHIGQVFMQIMEGFGAKVIAYDIFRNPELEKKGYYVDSLDDLYKQADVISLHVPDVPANVHMINDESIAKMKQDVVIVNVSRGPLVDTDAVIRGLDSGKIFGYAMDVYEGEVGIFNEDWEGKEFPDARLADLIARPNVLVTPHTAFYTTHAVRNMVVKAFDNNLELVEGKEAETPVKVG.

NAD(+)-binding positions include 156–157 (HI), Asp-176, 207–208 (VP), Asn-213, 234–236 (VSR), and Asp-260. Arg-236 is an active-site residue. Glu-265 is an active-site residue. His-297 functions as the Proton donor in the catalytic mechanism.

Belongs to the D-isomer specific 2-hydroxyacid dehydrogenase family. As to quaternary structure, homodimer.

The catalysed reaction is (R)-lactate + NAD(+) = pyruvate + NADH + H(+). The sequence is that of D-lactate dehydrogenase (ldhA) from Lactobacillus delbrueckii subsp. bulgaricus (strain ATCC 11842 / DSM 20081 / BCRC 10696 / JCM 1002 / NBRC 13953 / NCIMB 11778 / NCTC 12712 / WDCM 00102 / Lb 14).